Reading from the N-terminus, the 473-residue chain is GTPase Der (473 aa).

EngA-type G domains lie at 5-170 and 178-351; these read PVVA…PNQE and LKLA…QSSM. GTP contacts are provided by residues 11 to 18, 58 to 62, 123 to 126, 184 to 191, 231 to 235, and 296 to 299; these read GRPNVGKS, DTGGI, NKVD, DTAGV, and NKWD. A KH-like domain is found at 352–436; it reads FEVSTNRLTQ…PLNVVFKLNE (85 aa). Over residues 438–454 the composition is skewed to polar residues; that stretch reads PYANKSDTPTKAKTQQL. The tract at residues 438–473 is disordered; it reads PYANKSDTPTKAKTQQLRQRERNRAQKFTTKDKKPR. Positions 455–473 are enriched in basic and acidic residues; it reads RQRERNRAQKFTTKDKKPR.

This sequence belongs to the TRAFAC class TrmE-Era-EngA-EngB-Septin-like GTPase superfamily. EngA (Der) GTPase family. As to quaternary structure, associates with the 50S ribosomal subunit.

In terms of biological role, GTPase that plays an essential role in the late steps of ribosome biogenesis. In Psychrobacter arcticus (strain DSM 17307 / VKM B-2377 / 273-4), this protein is GTPase Der.